The following is a 95-amino-acid chain: Aspartyl/glutamyl-tRNA(Asn/Gln) amidotransferase subunit C (95 aa).

Belongs to the GatC family. In terms of assembly, heterotrimer of A, B and C subunits.

It catalyses the reaction L-glutamyl-tRNA(Gln) + L-glutamine + ATP + H2O = L-glutaminyl-tRNA(Gln) + L-glutamate + ADP + phosphate + H(+). It carries out the reaction L-aspartyl-tRNA(Asn) + L-glutamine + ATP + H2O = L-asparaginyl-tRNA(Asn) + L-glutamate + ADP + phosphate + 2 H(+). In terms of biological role, allows the formation of correctly charged Asn-tRNA(Asn) or Gln-tRNA(Gln) through the transamidation of misacylated Asp-tRNA(Asn) or Glu-tRNA(Gln) in organisms which lack either or both of asparaginyl-tRNA or glutaminyl-tRNA synthetases. The reaction takes place in the presence of glutamine and ATP through an activated phospho-Asp-tRNA(Asn) or phospho-Glu-tRNA(Gln). This chain is Aspartyl/glutamyl-tRNA(Asn/Gln) amidotransferase subunit C, found in Prochlorococcus marinus (strain NATL2A).